Consider the following 120-residue polypeptide: NAD(P)H-quinone oxidoreductase subunit 3, chloroplastic (120 aa).

Transmembrane regions (helical) follow at residues Ile9–Gly29, Met64–Val84, and Ile88–Ser108.

It belongs to the complex I subunit 3 family. As to quaternary structure, NDH is composed of at least 16 different subunits, 5 of which are encoded in the nucleus.

It is found in the plastid. The protein resides in the chloroplast thylakoid membrane. It catalyses the reaction a plastoquinone + NADH + (n+1) H(+)(in) = a plastoquinol + NAD(+) + n H(+)(out). The catalysed reaction is a plastoquinone + NADPH + (n+1) H(+)(in) = a plastoquinol + NADP(+) + n H(+)(out). Functionally, NDH shuttles electrons from NAD(P)H:plastoquinone, via FMN and iron-sulfur (Fe-S) centers, to quinones in the photosynthetic chain and possibly in a chloroplast respiratory chain. The immediate electron acceptor for the enzyme in this species is believed to be plastoquinone. Couples the redox reaction to proton translocation, and thus conserves the redox energy in a proton gradient. The chain is NAD(P)H-quinone oxidoreductase subunit 3, chloroplastic from Nymphaea alba (White water-lily).